Consider the following 200-residue polypeptide: Diadenylate cyclase (200 aa).

A helical transmembrane segment spans residues 5–25; the sequence is ILLFITLIFLLLLFVFLIAFA. Residues 28–185 form the DAC domain; sequence NKRVRNYVVR…KGVIKTLSSN (158 aa).

The protein belongs to the adenylate cyclase family. DacB/CdaS subfamily. As to quaternary structure, probably oligomerizes.

Its subcellular location is the cell membrane. The catalysed reaction is 2 ATP = 3',3'-c-di-AMP + 2 diphosphate. Its function is as follows. Catalyzes the condensation of 2 ATP molecules into cyclic di-AMP (c-di-AMP), a second messenger used to regulate differing processes in different bacteria. In Mycoplasma genitalium (strain ATCC 33530 / DSM 19775 / NCTC 10195 / G37) (Mycoplasmoides genitalium), this protein is Diadenylate cyclase.